Here is a 79-residue protein sequence, read N- to C-terminus: Large ribosomal subunit protein eL38 (79 aa).

This sequence belongs to the eukaryotic ribosomal protein eL38 family.

This chain is Large ribosomal subunit protein eL38 (RPL38), found in Theileria parva (East coast fever infection agent).